The chain runs to 194 residues: Isopentenyl-diphosphate Delta-isomerase (194 aa).

Positions 35 and 42 each coordinate Mn(2+). One can recognise a Nudix hydrolase domain in the interval 40–174 (PLHLAFSSYL…PWALSPWSVD (135 aa)). Cysteine 77 is an active-site residue. A Mn(2+)-binding site is contributed by histidine 79. Glutamate 97 is a binding site for Mg(2+). The Mn(2+) site is built by glutamate 124 and glutamate 126. Glutamate 126 is an active-site residue.

It belongs to the IPP isomerase type 1 family. Mg(2+) serves as cofactor. Requires Mn(2+) as cofactor.

The protein localises to the cytoplasm. The catalysed reaction is isopentenyl diphosphate = dimethylallyl diphosphate. The protein operates within isoprenoid biosynthesis; dimethylallyl diphosphate biosynthesis; dimethylallyl diphosphate from isopentenyl diphosphate: step 1/1. Functionally, catalyzes the 1,3-allylic rearrangement of the homoallylic substrate isopentenyl (IPP) to its highly electrophilic allylic isomer, dimethylallyl diphosphate (DMAPP). The chain is Isopentenyl-diphosphate Delta-isomerase from Frankia alni (strain DSM 45986 / CECT 9034 / ACN14a).